Here is a 409-residue protein sequence, read N- to C-terminus: Shaggy-related protein kinase NtK-1 (409 aa).

Positions 1-27 (MTSVGLAPVSGLRESSSHSVGVDRLPE) are disordered. Residues 73–357 (YMAERIVGQG…ALEAVTHAFF (285 aa)) enclose the Protein kinase domain. ATP-binding positions include 79–87 (VGQGSFGVV) and K102. D198 acts as the Proton acceptor in catalysis.

This sequence belongs to the protein kinase superfamily. CMGC Ser/Thr protein kinase family. GSK-3 subfamily. Autophosphorylated mainly on threonine and serine residues.

The enzyme catalyses L-seryl-[protein] + ATP = O-phospho-L-seryl-[protein] + ADP + H(+). It catalyses the reaction L-threonyl-[protein] + ATP = O-phospho-L-threonyl-[protein] + ADP + H(+). Functionally, may mediate extracellular signals to regulate transcription in differentiating cells. This Nicotiana tabacum (Common tobacco) protein is Shaggy-related protein kinase NtK-1 (NTK-1).